A 334-amino-acid polypeptide reads, in one-letter code: Transcription factor MYB92 (334 aa).

HTH myb-type domains are found at residues 9–61 (DSGL…TNYL) and 62–116 (RPDI…KKKL). 2 consecutive DNA-binding regions (H-T-H motif) follow at residues 37–61 (WRALPKLAGLNRCGKSCRLRWTNYL) and 89–112 (WSTIANQLPGRTDNEIKNFWNTHL).

As to quaternary structure, interacts with FBX5. Highly expressed in roots and at lower levels in stems, flowers and siliques.

The protein localises to the nucleus. In terms of biological role, probable transcription factor. This is Transcription factor MYB92 from Arabidopsis thaliana (Mouse-ear cress).